Reading from the N-terminus, the 373-residue chain is Alginate lyase (373 aa).

Residues Met1–Ala25 form the signal peptide. Substrate contacts are provided by residues Ser66 to Lys67, His139 to Thr140, and Tyr257.

It belongs to the polysaccharide lyase 5 family.

It localises to the periplasm. It carries out the reaction Eliminative cleavage of alginate to give oligosaccharides with 4-deoxy-alpha-L-erythro-hex-4-enuronosyl groups at their non-reducing ends and beta-D-mannuronate at their reducing end.. Its function is as follows. Catalyzes the depolymerization of alginate by cleaving the beta-1,4 glycosidic bond between two adjacent sugar residues via a beta-elimination mechanism. May serve to degrade mislocalized alginate that is trapped in the periplasmic space. The chain is Alginate lyase from Pseudomonas fluorescens.